Reading from the N-terminus, the 421-residue chain is Isocitrate dehydrogenase [NADP], mitochondrial (421 aa).

Residues 1–8 (ARAAARHY) constitute a mitochondrion transit peptide. An N6-acetyllysine mark is found at Lys14, Lys17, Lys36, and Lys38. Residues Lys49 and Lys75 each carry the N6-acetyllysine; alternate modification. N6-succinyllysine; alternate is present on residues Lys49 and Lys75. NADP(+) is bound by residues 84-86 (TIT) and Arg91. Thr86 serves as a coordination point for D-threo-isocitrate. D-threo-isocitrate is bound by residues 103–109 (SPNGTIR) and Arg118. The residue at position 124 (Lys124) is an N6-acetyllysine. At Lys135 the chain carries N6-acetyllysine; alternate. At Lys135 the chain carries N6-succinyllysine; alternate. Arg141 is a D-threo-isocitrate binding site. N6-acetyllysine; alternate occurs at positions 149 and 162. An N6-succinyllysine; alternate mark is found at Lys149 and Lys162. N6-acetyllysine is present on Lys168. Lys225 carries the post-translational modification N6-acetyllysine; alternate. N6-succinyllysine; alternate is present on Lys225. N6-acetyllysine occurs at positions 232, 241, 244, and 249. An N6-acetyllysine; alternate modification is found at Lys251. N6-succinyllysine; alternate is present on Lys251. Asp260 serves as a coordination point for Mn(2+). Lys268 serves as a coordination point for NADP(+). Asp283 contributes to the Mn(2+) binding site. Residues 318 to 323 (GTVTRH) and Asn336 each bind NADP(+). Lys353 is modified (N6-acetyllysine; alternate). An N6-succinyllysine; alternate modification is found at Lys353. 3 positions are modified to N6-acetyllysine: Lys369, Lys382, and Lys411.

The protein belongs to the isocitrate and isopropylmalate dehydrogenases family. As to quaternary structure, homodimer. Mg(2+) is required as a cofactor. The cofactor is Mn(2+). In terms of processing, acetylation at Lys-382 dramatically reduces catalytic activity. Deacetylated by SIRT3.

The protein localises to the mitochondrion. It carries out the reaction D-threo-isocitrate + NADP(+) = 2-oxoglutarate + CO2 + NADPH. Its function is as follows. Plays a role in intermediary metabolism and energy production. It may tightly associate or interact with the pyruvate dehydrogenase complex. The polypeptide is Isocitrate dehydrogenase [NADP], mitochondrial (IDH2) (Sus scrofa (Pig)).